The chain runs to 181 residues: MTAPTLEEIKNCIKSIPDYPIPGIMFRDITSLIENGAAFSATINLLVERYKDQNISKVVGTEARGFIFGAPLAAAIGAGFVPVRKPGKLPRTTVHENYELEYGTDSLHIHSDAIKKNERVLLVDDLLATGGTAEASIKLIHRSGGIVIESAFVIELPALKGAQKLHALNVPYFSLIKFEGE.

It belongs to the purine/pyrimidine phosphoribosyltransferase family. In terms of assembly, homodimer.

Its subcellular location is the cytoplasm. It carries out the reaction AMP + diphosphate = 5-phospho-alpha-D-ribose 1-diphosphate + adenine. Its pathway is purine metabolism; AMP biosynthesis via salvage pathway; AMP from adenine: step 1/1. In terms of biological role, catalyzes a salvage reaction resulting in the formation of AMP, that is energically less costly than de novo synthesis. In Psychromonas ingrahamii (strain DSM 17664 / CCUG 51855 / 37), this protein is Adenine phosphoribosyltransferase.